The chain runs to 134 residues: UPF0412 protein YaaI (134 aa).

Positions 1–23 (MKSVFTISASLAISLMLCCTAQA) are cleaved as a signal peptide.

The protein belongs to the UPF0412 family.

This chain is UPF0412 protein YaaI, found in Escherichia coli (strain ATCC 8739 / DSM 1576 / NBRC 3972 / NCIMB 8545 / WDCM 00012 / Crooks).